The primary structure comprises 361 residues: Probable lipid desaturase ADS3.2, chloroplastic (361 aa).

A chloroplast-targeting transit peptide spans 1–57; the sequence is MMSLSTTLKPLSHFSPFVKRHNPKTNNTLFTLDTHNFTNSFWSKRGGSVSHRKHTVV. The next 2 membrane-spanning stretches (helical) occupy residues 99–118 and 122–139; these read LVIF…YFSW and WVFP…TLSY. Residues 140-145 carry the Histidine box-1 motif; sequence HRNLSH. Residues 177–181 carry the Histidine box-2 motif; sequence HRYHH. A helical membrane pass occupies residues 246–266; the sequence is FLFYFCGGMPLLVWGIGITIA. The Histidine box-3 motif lies at 309–313; it reads HNNHH.

Belongs to the fatty acid desaturase type 1 family. The cofactor is Fe(2+).

Its subcellular location is the plastid. The protein resides in the chloroplast membrane. Its pathway is lipid metabolism; polyunsaturated fatty acid biosynthesis. This is Probable lipid desaturase ADS3.2, chloroplastic from Arabidopsis thaliana (Mouse-ear cress).